A 162-amino-acid chain; its full sequence is MREYQRLKGFTDNLELRRRNRATVEHYMRMKGAERLQRHSLFVEDGCAGNWTTESGEPLVFRGHESLRRLAEWLERCFPDWEWHNVRIFETEDPNHFWVECDGRGKALVPGYPQGYCENHYIHSFELENGRIKRNREFMNPMQKLRALGIAVPQIKRDGIPT.

Belongs to the PhzA/PhzB family.

It participates in antibiotic biosynthesis; phenazine biosynthesis. In terms of biological role, involved in the biosynthesis of the antibiotic phenazine, a nitrogen-containing heterocyclic molecule having important roles in virulence, competition and biological control. PhzA2 (operon phzA2B2C2E2F2G2) has a role in the biosynthesis of the phenazine during both planktonic growth and biofilm development, and in host infection during biofilm development. In Pseudomonas aeruginosa (strain ATCC 15692 / DSM 22644 / CIP 104116 / JCM 14847 / LMG 12228 / 1C / PRS 101 / PAO1), this protein is Phenazine biosynthesis protein PhzA2.